Reading from the N-terminus, the 329-residue chain is MLRVFIFFVFLGSGLAGRIKPQITCKYFISENNTWYKYNVTILNGTIVLPAYNMIPTKAAGISCTCHDIDYLQKNNISIHYNTSILKTFQDIRIIRCGMKNISEIAGGFGKELKFLDLRYNNLQFIDYNILRKLIRSNTPTYLYYNNLMCGKRNCPLYYFLLKQEQTYLKLLPQFFLRRISFSNNNTYLYHFLSCGNKPGHEFLEYQTKYCRTKFPEINITVNQLITKKNTERYKNCYPFVLVSILCSCISFLFLIICLLRSICKKYSCTKQGKSTHKYIPLIPSYTFSLKKHRHPETAVVEDHTTTANSPIVYIPTTEEKKASCSRRK.

The N-terminal stretch at 1 to 31 is a signal peptide; the sequence is MLRVFIFFVFLGSGLAGRIKPQITCKYFISE. N-linked (GlcNAc...) asparagine; by host glycosylation is found at Asn-32, Asn-39, Asn-44, Asn-76, Asn-82, and Asn-101. At 32-239 the chain is on the extracellular side; that stretch reads NNTWYKYNVT…NTERYKNCYP (208 aa). Residues 112-133 form an LRR repeat; that stretch reads ELKFLDLRYNNLQFIDYNILRK. 2 N-linked (GlcNAc...) asparagine; by host glycosylation sites follow: Asn-185 and Asn-219. A disulfide bridge connects residues Cys-195 and Cys-237. Residues 240–260 form a helical membrane-spanning segment; the sequence is FVLVSILCSCISFLFLIICLL. Over 261–329 the chain is Cytoplasmic; sequence RSICKKYSCT…EKKASCSRRK (69 aa).

It belongs to the asfivirus I329L family. Post-translationally, highly glycosylated.

Its subcellular location is the host endoplasmic reticulum membrane. The protein resides in the host Golgi apparatus membrane. Its function is as follows. Viral TLR3 homolog that probably prevents TLR3 dimerization and subsequent induction of IFN. Inhibits dsRNA-stimulated activation of NF-kB and IRF3. The sequence is that of Transmembrane protein I329L from Ornithodoros (relapsing fever ticks).